The following is a 269-amino-acid chain: Hemin import ATP-binding protein HmuV (269 aa).

In terms of domain architecture, ABC transporter spans 2–242; sequence LEVIHTGLNI…AMVEACFDLP (241 aa). ATP is bound at residue 34 to 41; that stretch reads GPNGAGKS.

Belongs to the ABC transporter superfamily. Heme (hemin) importer (TC 3.A.1.14.5) family. As to quaternary structure, the complex is composed of two ATP-binding proteins (HmuV), two transmembrane proteins (HmuU) and a solute-binding protein (HmuT).

The protein resides in the cell inner membrane. Part of the ABC transporter complex HmuTUV involved in hemin import. Responsible for energy coupling to the transport system. The sequence is that of Hemin import ATP-binding protein HmuV from Methylobacillus flagellatus (strain ATCC 51484 / DSM 6875 / VKM B-1610 / KT).